The chain runs to 357 residues: DNA replication and repair protein RecF (357 aa).

30–37 (GANGSGKT) is a binding site for ATP.

The protein belongs to the RecF family.

The protein localises to the cytoplasm. In terms of biological role, the RecF protein is involved in DNA metabolism; it is required for DNA replication and normal SOS inducibility. RecF binds preferentially to single-stranded, linear DNA. It also seems to bind ATP. The polypeptide is DNA replication and repair protein RecF (Citrobacter koseri (strain ATCC BAA-895 / CDC 4225-83 / SGSC4696)).